Here is a 278-residue protein sequence, read N- to C-terminus: MTFNDRIAELRDRVRQQRPLIHHITNFVVMNDTANVTLHIGGLPVMAHDREEVAEMVAAAGALVLNVGTLSPDWIEAMIIAGKRANELGIPIVLDPVGAGATSLRTSSNRRLLETLQVAVIRGNSGEIGALAGMGGVVKGVEAVVEADDPLAAAQVLARQYHTVVAVTGRRDLVTDGSRVLAVDNGHEWLKTLTGTGCSATTVIAAFTAVERDYLFAAAAGLACFGLAAELAAPQARGPASFKVAFYDAIYHLAADQIRAGARVVDLSTEQSKAVAQS.

Met-46 is a binding site for substrate. ATP-binding residues include Arg-122 and Thr-168. Gly-195 is a binding site for substrate.

The protein belongs to the Thz kinase family. Mg(2+) is required as a cofactor.

The catalysed reaction is 5-(2-hydroxyethyl)-4-methylthiazole + ATP = 4-methyl-5-(2-phosphooxyethyl)-thiazole + ADP + H(+). The protein operates within cofactor biosynthesis; thiamine diphosphate biosynthesis; 4-methyl-5-(2-phosphoethyl)-thiazole from 5-(2-hydroxyethyl)-4-methylthiazole: step 1/1. Catalyzes the phosphorylation of the hydroxyl group of 4-methyl-5-beta-hydroxyethylthiazole (THZ). This is Hydroxyethylthiazole kinase from Chloroflexus aggregans (strain MD-66 / DSM 9485).